We begin with the raw amino-acid sequence, 256 residues long: Ribonuclease 3 (256 aa).

The RNase III domain occupies 3–125 (LDALQQRLGY…IVGAVFLDAG (123 aa)). E38 is a Mg(2+) binding site. D42 is an active-site residue. Residues D111 and E114 each contribute to the Mg(2+) site. E114 is an active-site residue. In terms of domain architecture, DRBM spans 152-222 (DAKTLLQEYL…AKLALDEVQK (71 aa)). The tract at residues 230 to 256 (RSRAERTGKTRKQPVPQDPQLSLRLKE) is disordered.

This sequence belongs to the ribonuclease III family. Homodimer. Mg(2+) is required as a cofactor.

It is found in the cytoplasm. It catalyses the reaction Endonucleolytic cleavage to 5'-phosphomonoester.. Functionally, digests double-stranded RNA. Involved in the processing of primary rRNA transcript to yield the immediate precursors to the large and small rRNAs (23S and 16S). Processes some mRNAs, and tRNAs when they are encoded in the rRNA operon. Processes pre-crRNA and tracrRNA of type II CRISPR loci if present in the organism. This chain is Ribonuclease 3, found in Cupriavidus necator (strain ATCC 17699 / DSM 428 / KCTC 22496 / NCIMB 10442 / H16 / Stanier 337) (Ralstonia eutropha).